Consider the following 488-residue polypeptide: Palmitoleoyl-protein carboxylesterase notum1' (488 aa).

Positions methionine 1–glycine 19 are cleaved as a signal peptide. Asparagine 90 is a glycosylation site (N-linked (GlcNAc...) asparagine). Residues serine 226, aspartate 334, and histidine 383 each act as charge relay system in the active site.

This sequence belongs to the pectinacetylesterase family. Notum subfamily. In terms of tissue distribution, expressed in the egg and through cleavage to gastrulation stages. Enriched in the animal (prospective ectoderm) and dorsal regions in early gastrula. Shows a dynamic expression during embryogenesis, in particular during neural induction and antero-posterior (AP) patterning.

The protein localises to the secreted. It carries out the reaction [Wnt protein]-O-(9Z)-hexadecenoyl-L-serine + H2O = [Wnt protein]-L-serine + (9Z)-hexadecenoate + H(+). Functionally, carboxylesterase that acts as a key negative regulator of the Wnt signaling pathway by specifically mediating depalmitoleoylation of WNT proteins. Serine palmitoleoylation of WNT proteins is required for efficient binding to frizzled receptors. Functions in the prospective ectoderm and is required for neural induction. In Xenopus laevis (African clawed frog), this protein is Palmitoleoyl-protein carboxylesterase notum1'.